Reading from the N-terminus, the 423-residue chain is AP-1 complex subunit mu-1 (423 aa).

Ser2 carries the post-translational modification N-acetylserine. Phosphothreonine occurs at positions 152, 154, and 223. Residues 168-421 (KNEVFLDVIE…ITQNGDYQLR (254 aa)) form the MHD domain.

Belongs to the adaptor complexes medium subunit family. In terms of assembly, adaptor protein complex 1 (AP-1) is a heterotetramer composed of two large adaptins (gamma-type subunit AP1G1 and beta-type subunit AP1B1), a medium adaptin (mu-type subunit AP1M1 or AP1M2) and a small adaptin (sigma-type subunit AP1S1 or AP1S2 or AP1S3). Interacts with MARCHF11. In terms of processing, phosphorylation of membrane-bound AP1M1/AP1M2 increases its affinity for sorting signals.

Its subcellular location is the golgi apparatus. It localises to the cytoplasmic vesicle. The protein resides in the clathrin-coated vesicle membrane. Subunit of clathrin-associated adaptor protein complex 1 that plays a role in protein sorting in the trans-Golgi network (TGN) and endosomes. The AP complexes mediate the recruitment of clathrin to membranes and the recognition of sorting signals within the cytosolic tails of transmembrane cargo molecules. In Mus musculus (Mouse), this protein is AP-1 complex subunit mu-1 (Ap1m1).